The following is a 260-amino-acid chain: Recombination-promoting nuclease RpnD (260 aa).

Belongs to the Rpn/YhgA-like nuclease family.

In terms of biological role, a low activity DNA endonuclease probably yielding 3'-hydroxyl ends. Involved in RecA-independent recombination and horizontal gene transfer. The sequence is that of Recombination-promoting nuclease RpnD (rpnD) from Escherichia coli O157:H7.